The primary structure comprises 429 residues: UDP-N-acetylglucosamine 1-carboxyvinyltransferase (429 aa).

22-23 (KN) serves as a coordination point for phosphoenolpyruvate. Residue Arg102 coordinates UDP-N-acetyl-alpha-D-glucosamine. The Proton donor role is filled by Cys126. Cys126 is modified (2-(S-cysteinyl)pyruvic acid O-phosphothioketal). Residues 131–135 (RPVDL), Asp316, and Ile338 contribute to the UDP-N-acetyl-alpha-D-glucosamine site.

The protein belongs to the EPSP synthase family. MurA subfamily.

It is found in the cytoplasm. The enzyme catalyses phosphoenolpyruvate + UDP-N-acetyl-alpha-D-glucosamine = UDP-N-acetyl-3-O-(1-carboxyvinyl)-alpha-D-glucosamine + phosphate. The protein operates within cell wall biogenesis; peptidoglycan biosynthesis. Functionally, cell wall formation. Adds enolpyruvyl to UDP-N-acetylglucosamine. This is UDP-N-acetylglucosamine 1-carboxyvinyltransferase from Methylorubrum populi (strain ATCC BAA-705 / NCIMB 13946 / BJ001) (Methylobacterium populi).